We begin with the raw amino-acid sequence, 209 residues long: Holliday junction branch migration complex subunit RuvA (209 aa).

The segment at 1–64 is domain I; that stretch reads MIGKLKGLVD…EDSIKLYGFA (64 aa). The tract at residues 65–143 is domain II; the sequence is SETEREWFRL…ALGASLHTLA (79 aa). The interval 144 to 154 is flexible linker; that stretch reads GAGSEGAGVEA. The tract at residues 155–209 is domain III; it reads PASGAVSDAISVLVNLGFGRSQAAVAVAASSKALGSGAGAGDLAKRALQELAQSG.

Belongs to the RuvA family. Homotetramer. Forms an RuvA(8)-RuvB(12)-Holliday junction (HJ) complex. HJ DNA is sandwiched between 2 RuvA tetramers; dsDNA enters through RuvA and exits via RuvB. An RuvB hexamer assembles on each DNA strand where it exits the tetramer. Each RuvB hexamer is contacted by two RuvA subunits (via domain III) on 2 adjacent RuvB subunits; this complex drives branch migration. In the full resolvosome a probable DNA-RuvA(4)-RuvB(12)-RuvC(2) complex forms which resolves the HJ.

It localises to the cytoplasm. Its function is as follows. The RuvA-RuvB-RuvC complex processes Holliday junction (HJ) DNA during genetic recombination and DNA repair, while the RuvA-RuvB complex plays an important role in the rescue of blocked DNA replication forks via replication fork reversal (RFR). RuvA specifically binds to HJ cruciform DNA, conferring on it an open structure. The RuvB hexamer acts as an ATP-dependent pump, pulling dsDNA into and through the RuvAB complex. HJ branch migration allows RuvC to scan DNA until it finds its consensus sequence, where it cleaves and resolves the cruciform DNA. This is Holliday junction branch migration complex subunit RuvA from Methylocella silvestris (strain DSM 15510 / CIP 108128 / LMG 27833 / NCIMB 13906 / BL2).